The sequence spans 444 residues: Enolase 1 (444 aa).

Positions 165 and 174 each coordinate substrate. Residue Glu217 is the Proton donor of the active site. Residues Glu303 and Asp330 each coordinate substrate. Catalysis depends on Lys355, which acts as the Proton acceptor. Substrate contacts are provided by residues 382-385 (SHRS) and Lys406.

Belongs to the enolase family. As to quaternary structure, homodimer. The cofactor is Mg(2+).

It localises to the cytoplasm. The enzyme catalyses (2R)-2-phosphoglycerate = phosphoenolpyruvate + H2O. The protein operates within carbohydrate degradation; glycolysis; pyruvate from D-glyceraldehyde 3-phosphate: step 4/5. In Toxoplasma gondii, this protein is Enolase 1 (ENO1).